The sequence spans 379 residues: Chaperone protein DnaJ (379 aa).

A J domain is found at 5–69 (DYYEVLGISK…NKRATIDQFG (65 aa)). The CR-type zinc-finger motif lies at 136–218 (GTTKEISIRK…CHGKGTENKT (83 aa)). 8 residues coordinate Zn(2+): Cys-149, Cys-152, Cys-166, Cys-169, Cys-192, Cys-195, Cys-206, and Cys-209. CXXCXGXG motif repeat units follow at residues 149–156 (CETCHGDG), 166–173 (CSYCNGAG), 192–199 (CPKCNGSG), and 206–213 (CPTCHGKG).

The protein belongs to the DnaJ family. In terms of assembly, homodimer. Zn(2+) serves as cofactor.

Its subcellular location is the cytoplasm. Its function is as follows. Participates actively in the response to hyperosmotic and heat shock by preventing the aggregation of stress-denatured proteins and by disaggregating proteins, also in an autonomous, DnaK-independent fashion. Unfolded proteins bind initially to DnaJ; upon interaction with the DnaJ-bound protein, DnaK hydrolyzes its bound ATP, resulting in the formation of a stable complex. GrpE releases ADP from DnaK; ATP binding to DnaK triggers the release of the substrate protein, thus completing the reaction cycle. Several rounds of ATP-dependent interactions between DnaJ, DnaK and GrpE are required for fully efficient folding. Also involved, together with DnaK and GrpE, in the DNA replication of plasmids through activation of initiation proteins. The sequence is that of Chaperone protein DnaJ from Staphylococcus aureus.